The chain runs to 548 residues: 2-succinyl-5-enolpyruvyl-6-hydroxy-3-cyclohexene-1-carboxylate synthase (548 aa).

It belongs to the TPP enzyme family. MenD subfamily. Homodimer. Mg(2+) serves as cofactor. Requires Mn(2+) as cofactor. Thiamine diphosphate is required as a cofactor.

The enzyme catalyses isochorismate + 2-oxoglutarate + H(+) = 5-enolpyruvoyl-6-hydroxy-2-succinyl-cyclohex-3-ene-1-carboxylate + CO2. Its pathway is quinol/quinone metabolism; 1,4-dihydroxy-2-naphthoate biosynthesis; 1,4-dihydroxy-2-naphthoate from chorismate: step 2/7. The protein operates within quinol/quinone metabolism; menaquinone biosynthesis. Catalyzes the thiamine diphosphate-dependent decarboxylation of 2-oxoglutarate and the subsequent addition of the resulting succinic semialdehyde-thiamine pyrophosphate anion to isochorismate to yield 2-succinyl-5-enolpyruvyl-6-hydroxy-3-cyclohexene-1-carboxylate (SEPHCHC). This Mycobacterium ulcerans (strain Agy99) protein is 2-succinyl-5-enolpyruvyl-6-hydroxy-3-cyclohexene-1-carboxylate synthase.